The primary structure comprises 99 residues: DNA-directed RNA polymerase subunit omega (99 aa).

Belongs to the RNA polymerase subunit omega family. In terms of assembly, the RNAP catalytic core consists of 2 alpha, 1 beta, 1 beta' and 1 omega subunit. When a sigma factor is associated with the core the holoenzyme is formed, which can initiate transcription.

It carries out the reaction RNA(n) + a ribonucleoside 5'-triphosphate = RNA(n+1) + diphosphate. Its function is as follows. Promotes RNA polymerase assembly. Latches the N- and C-terminal regions of the beta' subunit thereby facilitating its interaction with the beta and alpha subunits. The sequence is that of DNA-directed RNA polymerase subunit omega from Xylella fastidiosa (strain Temecula1 / ATCC 700964).